The primary structure comprises 333 residues: NADH-quinone oxidoreductase subunit H (333 aa).

Transmembrane regions (helical) follow at residues 15-35 (FFIF…FVTY), 88-108 (FILA…VIPF), 117-137 (IGVG…GVVT), 159-179 (ISYE…AGSL), 191-211 (VWYI…AVAE), 239-259 (WAFF…LITV), 274-296 (IPGA…WFRV), and 313-333 (VLLP…ELFF).

It belongs to the complex I subunit 1 family. As to quaternary structure, NDH-1 is composed of 14 different subunits. Subunits NuoA, H, J, K, L, M, N constitute the membrane sector of the complex.

It localises to the cell membrane. It catalyses the reaction a quinone + NADH + 5 H(+)(in) = a quinol + NAD(+) + 4 H(+)(out). Its function is as follows. NDH-1 shuttles electrons from NADH, via FMN and iron-sulfur (Fe-S) centers, to quinones in the respiratory chain. The immediate electron acceptor for the enzyme in this species is believed to be ubiquinone. Couples the redox reaction to proton translocation (for every two electrons transferred, four hydrogen ions are translocated across the cytoplasmic membrane), and thus conserves the redox energy in a proton gradient. This subunit may bind ubiquinone. This chain is NADH-quinone oxidoreductase subunit H, found in Bacillus anthracis (strain A0248).